The sequence spans 490 residues: Nicotinate phosphoribosyltransferase (490 aa).

His206 carries the phosphohistidine modification.

The protein belongs to the NAPRTase family. Post-translationally, transiently phosphorylated on a His residue during the reaction cycle. Phosphorylation strongly increases the affinity for substrates and increases the rate of nicotinate D-ribonucleotide production. Dephosphorylation regenerates the low-affinity form of the enzyme, leading to product release.

The catalysed reaction is nicotinate + 5-phospho-alpha-D-ribose 1-diphosphate + ATP + H2O = nicotinate beta-D-ribonucleotide + ADP + phosphate + diphosphate. It participates in cofactor biosynthesis; NAD(+) biosynthesis; nicotinate D-ribonucleotide from nicotinate: step 1/1. Functionally, catalyzes the synthesis of beta-nicotinate D-ribonucleotide from nicotinate and 5-phospho-D-ribose 1-phosphate at the expense of ATP. The polypeptide is Nicotinate phosphoribosyltransferase (pncB) (Bacillus subtilis (strain 168)).